Reading from the N-terminus, the 603-residue chain is Variable flagella 3 (603 aa).

Residues 169-289 (GGEVSAELRR…TEDLEARDRR (121 aa)) are a coiled coil. The segment covering 288–297 (RRMNSTDRIR) has biased composition (basic and acidic residues). Disordered regions lie at residues 288–526 (RRMN…PARA) and 539–564 (AGRG…SSKS). Residues 337-348 (SRSNSRGRGTSS) show a composition bias toward low complexity. A compositionally biased stretch (basic and acidic residues) spans 364 to 380 (PRFDPTEYVRQRKERES). The span at 397-406 (AGTSRASSVV) shows a compositional bias: polar residues. A compositionally biased stretch (gly residues) spans 486-510 (GASGGGAGGWSKFPGGGGGGVGGSG). The span at 511-520 (QRISSNSPRS) shows a compositional bias: polar residues.

The protein belongs to the CCDC61 family.

It is found in the cytoplasm. Its subcellular location is the cytoskeleton. The protein localises to the flagellum basal body. Functionally, required for normal flagella and striated fiber formation. The protein is Variable flagella 3 of Chlamydomonas reinhardtii (Chlamydomonas smithii).